The following is a 366-amino-acid chain: Ribosomal RNA large subunit methyltransferase M (366 aa).

Residues Ser188, 221–224 (CPGG), Asp240, Asp260, and Asp277 contribute to the S-adenosyl-L-methionine site. Lys306 (proton acceptor) is an active-site residue.

It belongs to the class I-like SAM-binding methyltransferase superfamily. RNA methyltransferase RlmE family. RlmM subfamily. Monomer.

It is found in the cytoplasm. The catalysed reaction is cytidine(2498) in 23S rRNA + S-adenosyl-L-methionine = 2'-O-methylcytidine(2498) in 23S rRNA + S-adenosyl-L-homocysteine + H(+). Catalyzes the 2'-O-methylation at nucleotide C2498 in 23S rRNA. The sequence is that of Ribosomal RNA large subunit methyltransferase M from Pectobacterium carotovorum subsp. carotovorum (strain PC1).